Consider the following 495-residue polypeptide: Aspartyl/glutamyl-tRNA(Asn/Gln) amidotransferase subunit B (495 aa).

The protein belongs to the GatB/GatE family. GatB subfamily. In terms of assembly, heterotrimer of A, B and C subunits.

The catalysed reaction is L-glutamyl-tRNA(Gln) + L-glutamine + ATP + H2O = L-glutaminyl-tRNA(Gln) + L-glutamate + ADP + phosphate + H(+). The enzyme catalyses L-aspartyl-tRNA(Asn) + L-glutamine + ATP + H2O = L-asparaginyl-tRNA(Asn) + L-glutamate + ADP + phosphate + 2 H(+). Allows the formation of correctly charged Asn-tRNA(Asn) or Gln-tRNA(Gln) through the transamidation of misacylated Asp-tRNA(Asn) or Glu-tRNA(Gln) in organisms which lack either or both of asparaginyl-tRNA or glutaminyl-tRNA synthetases. The reaction takes place in the presence of glutamine and ATP through an activated phospho-Asp-tRNA(Asn) or phospho-Glu-tRNA(Gln). The protein is Aspartyl/glutamyl-tRNA(Asn/Gln) amidotransferase subunit B of Methanosarcina acetivorans (strain ATCC 35395 / DSM 2834 / JCM 12185 / C2A).